Here is a 476-residue protein sequence, read N- to C-terminus: Inactive glucose-1-phosphate adenylyltransferase small subunit 2, chloroplastic (476 aa).

Residues 1–55 (MQISSSSFITKFTNLHMVRSTSDHHQWRHNYNLKQLFIPNLSVSNSQHLPLNQSV) constitute a chloroplast transit peptide.

It belongs to the bacterial/plant glucose-1-phosphate adenylyltransferase family. As to quaternary structure, heterotetramer. Expressed at very low levels in leaves, inflorescences, fruits, and roots.

The protein localises to the plastid. It is found in the chloroplast. This chain is Inactive glucose-1-phosphate adenylyltransferase small subunit 2, chloroplastic, found in Arabidopsis thaliana (Mouse-ear cress).